An 839-amino-acid polypeptide reads, in one-letter code: V-type proton ATPase 116 kDa subunit a 1 (839 aa).

Topologically, residues 1 to 395 (MGELFRSEEM…DAYGIGTYRE (395 aa)) are cytoplasmic. A phosphothreonine mark is found at Thr257 and Thr367. At Tyr371 the chain carries Phosphotyrosine. A helical membrane pass occupies residues 396-414 (INPAPYTVITFPFLFAVMF). Residues 415 to 416 (GD) are Vacuolar-facing. Residues 417–433 (FGHGILMTLFAVWMVLR) traverse the membrane as a helical segment. Topologically, residues 434–448 (ESRILSQKHENEMFS) are cytoplasmic. Residues 449-478 (MVFSGRYIILLMGLFSIYTGLIYNDCFSKS) traverse the membrane as a helical segment. Topologically, residues 479–542 (LNIFGSSWSV…ATNKLTFLNS (64 aa)) are vacuolar. A helical transmembrane segment spans residues 543 to 562 (FKMKMSVILGIIHMLFGVSL). Over 563-580 (SLFNHIYFKKPLNIYFGF) the chain is Cytoplasmic. A helical membrane pass occupies residues 581–601 (IPEIIFMSSLFGYLVILIFYK). At 602-646 (WTAYDAHSSRNAPSLLIHFINMFLFSYPESGNAMLYSGQKGIQCF) the chain is on the vacuolar side. A helical membrane pass occupies residues 647–666 (LIVVAMLCVPWMLLFKPLIL). Topologically, residues 667–726 (RHQYLRKKHLGTLNFGGIRVGNGPTEEDAEIIQHDQLSTHSEDAEEFDFGDTMVHQAIHT) are cytoplasmic. A helical transmembrane segment spans residues 727 to 751 (IEYCLGCISNTASYLRLWALSLAHA). Residues 752–772 (QLSEVLWTMVIHIGLHVRSLA) are Vacuolar-facing. A helical transmembrane segment spans residues 773–811 (GGLGLFFIFAAFATLTVAILLIMEGLSAFLHALRLHWVE). The Cytoplasmic segment spans residues 812–839 (FQNKFYTGTGFKFLPFSFEHIREGKFDE).

Belongs to the V-ATPase 116 kDa subunit family. V-ATPase is a heteromultimeric enzyme made up of two complexes: the ATP-hydrolytic V1 complex and the proton translocation V0 complex. The V1 complex consists of three catalytic AB heterodimers that form a heterohexamer, three peripheral stalks each consisting of EG heterodimers, one central rotor including subunits D and F, and the regulatory subunits C and H. The proton translocation complex V0 consists of the proton transport subunit a, a ring of proteolipid subunits c9c'', rotary subunit d, subunits e and f, and the accessory subunits ATP6AP1/Ac45 and ATP6AP2/PRR. Interacts with SPAAR. As to expression, predominantly expressed in neurons in the cortex and in the dentate gyrus, CA1 and CA3 regions of the hippocampus (at protein level). Expressed at lower levels in astrocytes, oligodendrocytes and microglia (at protein level). In the cerebellum, present in Purkinje and granule cells (at protein level).

Its subcellular location is the cytoplasmic vesicle. It localises to the clathrin-coated vesicle membrane. The protein resides in the secretory vesicle. The protein localises to the synaptic vesicle membrane. It is found in the melanosome. Functionally, subunit of the V0 complex of vacuolar(H+)-ATPase (V-ATPase), a multisubunit enzyme composed of a peripheral complex (V1) that hydrolyzes ATP and a membrane integral complex (V0) that translocates protons. V-ATPase is responsible for the acidification of various organelles, such as lysosomes, endosomes, the trans-Golgi network, and secretory granules, including synaptic vesicles. In certain cell types, can be exported to the plasma membrane, where it is involved in the acidification of the extracellular environment. Required for assembly and activity of the vacuolar ATPase. Through its action on compartment acidification, plays an essential role in neuronal development in terms of integrity and connectivity of neurons. This chain is V-type proton ATPase 116 kDa subunit a 1 (Atp6v0a1), found in Mus musculus (Mouse).